The sequence spans 55 residues: UPF0391 membrane protein Tbd_2772 (55 aa).

A run of 2 helical transmembrane segments spans residues Met1 to Ala21 and Ala28 to Met48.

Belongs to the UPF0391 family.

The protein localises to the cell membrane. This chain is UPF0391 membrane protein Tbd_2772, found in Thiobacillus denitrificans (strain ATCC 25259 / T1).